Here is a 212-residue protein sequence, read N- to C-terminus: Noggin-2 (212 aa).

The first 23 residues, 1-23 (MGSITRALPLLLLLLLCAHGTAS), serve as a signal peptide directing secretion. The tract at residues 37–56 (LPVPDLIENPDPEHDPREQD) is disordered. The span at 47–56 (DPEHDPREQD) shows a compositional bias: basic and acidic residues. Residue asparagine 84 is glycosylated (N-linked (GlcNAc...) asparagine).

It belongs to the noggin family. In terms of assembly, homodimer; disulfide-linked.

Its subcellular location is the secreted. Functionally, inhibitor of bone morphogenetic proteins (BMP) signaling. This Danio rerio (Zebrafish) protein is Noggin-2 (nog2).